A 392-amino-acid chain; its full sequence is Spermatogenesis associated 6-like protein (392 aa).

Phosphoserine is present on residues serine 260 and serine 263. Low complexity predominate over residues 286-301; it reads SCLDSSQFGKSSSSKQ. The tract at residues 286 to 305 is disordered; that stretch reads SCLDSSQFGKSSSSKQGDAD.

The protein belongs to the SPATA6 family.

The polypeptide is Spermatogenesis associated 6-like protein (SPATA6L) (Homo sapiens (Human)).